A 144-amino-acid chain; its full sequence is Large ribosomal subunit protein uL16 (144 aa).

It belongs to the universal ribosomal protein uL16 family. Part of the 50S ribosomal subunit.

In terms of biological role, binds 23S rRNA and is also seen to make contacts with the A and possibly P site tRNAs. The sequence is that of Large ribosomal subunit protein uL16 from Pediococcus pentosaceus (strain ATCC 25745 / CCUG 21536 / LMG 10740 / 183-1w).